The following is a 285-amino-acid chain: Acetyl-coenzyme A carboxylase carboxyl transferase subunit beta (285 aa).

The CoA carboxyltransferase N-terminal domain occupies 29 to 285 (IMTKCPKCKK…ILKIHQEVTK (257 aa)). Cysteine 33, cysteine 36, cysteine 52, and cysteine 55 together coordinate Zn(2+). Residues 33-55 (CPKCKKIMYTKELAENLNVCFNC) form a C4-type zinc finger.

Belongs to the AccD/PCCB family. Acetyl-CoA carboxylase is a heterohexamer composed of biotin carboxyl carrier protein (AccB), biotin carboxylase (AccC) and two subunits each of ACCase subunit alpha (AccA) and ACCase subunit beta (AccD). Zn(2+) serves as cofactor.

It localises to the cytoplasm. It catalyses the reaction N(6)-carboxybiotinyl-L-lysyl-[protein] + acetyl-CoA = N(6)-biotinyl-L-lysyl-[protein] + malonyl-CoA. It functions in the pathway lipid metabolism; malonyl-CoA biosynthesis; malonyl-CoA from acetyl-CoA: step 1/1. Its function is as follows. Component of the acetyl coenzyme A carboxylase (ACC) complex. Biotin carboxylase (BC) catalyzes the carboxylation of biotin on its carrier protein (BCCP) and then the CO(2) group is transferred by the transcarboxylase to acetyl-CoA to form malonyl-CoA. In Staphylococcus aureus (strain Mu3 / ATCC 700698), this protein is Acetyl-coenzyme A carboxylase carboxyl transferase subunit beta.